Here is a 302-residue protein sequence, read N- to C-terminus: Ribostamycin:4-(gamma-L-glutamylamino)-(S)-2-hydroxybutanoyl-[BtrI acyl-carrier protein] 4-(gamma-L-glutamylamino)-(S)-2-hydroxybutanoate transferase (302 aa).

It catalyses the reaction 4-(gamma-L-glutamylamino)-(2S)-2-hydroxybutanoyl-[BtrI ACP] + ribostamycin = gamma-L-glutamyl-butirosin B + holo-[BtrI ACP] + H(+). It participates in antibiotic biosynthesis; butirosin biosynthesis. Functionally, aminoglycoside acyltransferase that attaches the (S)-4-amino-2-hydroxybutyrate (AHBA) side chain from the acyl carrier protein BtrI to the aminoglycoside ribostamycin in the biosynthetic pathway of butirosin. The AHBA side chain protects the antibiotic from several common resistance mechanisms. In Niallia circulans (Bacillus circulans), this protein is Ribostamycin:4-(gamma-L-glutamylamino)-(S)-2-hydroxybutanoyl-[BtrI acyl-carrier protein] 4-(gamma-L-glutamylamino)-(S)-2-hydroxybutanoate transferase (btrH).